The sequence spans 695 residues: Threonine--tRNA ligase (695 aa).

The TGS domain occupies 6 to 75 (SAIFVNTTDT…ETTATFTAVP (70 aa)). The catalytic stretch occupies residues 274-580 (DHRRLGTELD…LLEHYAGAFP (307 aa)). Residues Cys-379, His-430, and His-557 each coordinate Zn(2+).

It belongs to the class-II aminoacyl-tRNA synthetase family. Homodimer. The cofactor is Zn(2+).

It is found in the cytoplasm. The enzyme catalyses tRNA(Thr) + L-threonine + ATP = L-threonyl-tRNA(Thr) + AMP + diphosphate + H(+). Functionally, catalyzes the attachment of threonine to tRNA(Thr) in a two-step reaction: L-threonine is first activated by ATP to form Thr-AMP and then transferred to the acceptor end of tRNA(Thr). Also edits incorrectly charged L-seryl-tRNA(Thr). In Corynebacterium glutamicum (strain ATCC 13032 / DSM 20300 / JCM 1318 / BCRC 11384 / CCUG 27702 / LMG 3730 / NBRC 12168 / NCIMB 10025 / NRRL B-2784 / 534), this protein is Threonine--tRNA ligase.